Reading from the N-terminus, the 473-residue chain is Photosystem II CP43 reaction center protein (473 aa).

A propeptide spanning residues 1 to 14 is cleaved from the precursor; sequence MKTLYSLRRFYPVE. N-acetylthreonine is present on Thr15. Thr15 bears the Phosphothreonine mark. 5 helical membrane-spanning segments follow: residues 69–93, 134–155, 178–200, 255–275, and 291–312; these read LFEVAHFVPEKPMYEQGLILLPHLA, LLGPETLEESFPFFGYVWKDRN, KALYFGGVYDTWAPGGGDVRRIT, KPFAWARRALVWSGEAYLSYS, and WFNNTAYPSEFYGPTGPEASQA. Residue Glu367 participates in [CaMn4O5] cluster binding. A helical transmembrane segment spans residues 447–471; it reads RARAAAAGFEKGIDRDFEPVLSMTP.

Belongs to the PsbB/PsbC family. PsbC subfamily. As to quaternary structure, PSII is composed of 1 copy each of membrane proteins PsbA, PsbB, PsbC, PsbD, PsbE, PsbF, PsbH, PsbI, PsbJ, PsbK, PsbL, PsbM, PsbT, PsbX, PsbY, PsbZ, Psb30/Ycf12, at least 3 peripheral proteins of the oxygen-evolving complex and a large number of cofactors. It forms dimeric complexes. Requires Binds multiple chlorophylls and provides some of the ligands for the Ca-4Mn-5O cluster of the oxygen-evolving complex. It may also provide a ligand for a Cl- that is required for oxygen evolution. PSII binds additional chlorophylls, carotenoids and specific lipids. as cofactor.

Its subcellular location is the plastid. The protein localises to the chloroplast thylakoid membrane. One of the components of the core complex of photosystem II (PSII). It binds chlorophyll and helps catalyze the primary light-induced photochemical processes of PSII. PSII is a light-driven water:plastoquinone oxidoreductase, using light energy to abstract electrons from H(2)O, generating O(2) and a proton gradient subsequently used for ATP formation. This chain is Photosystem II CP43 reaction center protein, found in Illicium oligandrum (Star anise).